The chain runs to 288 residues: Borealin (288 aa).

The tract at residues 1-58 (MAPKKRSSRGTRTNTLRSRKLASFLKDFDREVQVRTKQIESDRQTLLKEVENLYNIEV) is required for interaction with INCENP. The segment at 1–88 (MAPKKRSSRG…NRQALEEAAT (88 aa)) is required for centromere localization. The required for interaction with SENP3 stretch occupies residues 1 to 149 (MAPKKRSSRG…RKSHKNLRSA (149 aa)). The tract at residues 10 to 109 (GTRTNTLRSR…TAEAIQTPLK (100 aa)) is required to form a minimal CPC core complex that localizes to the central spindle and midbody and properly executes the role of the CPC during cytokinesis. The interval 20–78 (KLASFLKDFDREVQVRTKQIESDRQTLLKEVENLYNIEVLRLPKALQVMKWLDYFALGG) is required for interaction with INCENP and BIRC5. Phosphothreonine; by TTK is present on Thr88. The residue at position 91 (Arg91) is a Citrulline. Residue Thr94 is modified to Phosphothreonine; by TTK. Thr106 carries the post-translational modification Phosphothreonine. Ser110 is modified (phosphoserine). Over residues 124–134 (KEEEEDEEEEG) the composition is skewed to acidic residues. Residues 124 to 173 (KEEEEDEEEEGGGGGGRKSHKNLRSARVKRCPPSKKRTQSIQGRSRSKRL) form a disordered region. The segment covering 140–161 (RKSHKNLRSARVKRCPPSKKRT) has biased composition (basic residues). Lys144 is covalently cross-linked (Glycyl lysine isopeptide (Lys-Gly) (interchain with G-Cter in SUMO2)). Ser174 is subject to Phosphoserine; by AURKB. Residues Thr197 and Thr212 each carry the phosphothreonine modification. A phosphoserine mark is found at Ser227, Ser232, Ser246, and Ser252.

Belongs to the borealin family. May form homooligomers and homodimers. Component of the chromosomal passenger complex (CPC) composed of at least BIRC5/survivin, CDCA8/borealin, INCENP, AURKB or AURKC; in the complex forms a triple-helix bundle-based subcomplex with INCENP and BIRC5. Interacts with SENP3, UBE2I and RANBP2. Interacts (phosphorylated) with SGO1 and SGO2; the association is dependent on CDK1. Post-translationally, phosphorylated by TTK, essentially at Thr-88 and Thr-94. Phosphorylation (probably by CDK1) promotes targeting of the CPC to centromeric DNA. In terms of processing, sumoylated by UBE2I and RANBP2. Desumoylated by SENP3 through the removal of SUMO2 and SUMO3. Citrullinated by PADI4.

It localises to the nucleus. The protein resides in the nucleolus. It is found in the cytoplasm. Its subcellular location is the chromosome. The protein localises to the centromere. It localises to the cytoskeleton. The protein resides in the spindle. Its function is as follows. Component of the chromosomal passenger complex (CPC), a complex that acts as a key regulator of mitosis. The CPC complex has essential functions at the centromere in ensuring correct chromosome alignment and segregation and is required for chromatin-induced microtubule stabilization and spindle assembly. In the complex, it may be required to direct the CPC to centromeric DNA. This Rattus norvegicus (Rat) protein is Borealin (Cdca8).